We begin with the raw amino-acid sequence, 56 residues long: Serine protease inhibitor Kazal-type 1 (56 aa).

The region spanning 3–56 (LGREAKCNNNAGGCTKIYNPVCGTDGNTYPNECMLCVENQKRQMPVLIQRSGPC) is the Kazal-like domain. Disulfide bonds link cysteine 9–cysteine 38, cysteine 16–cysteine 35, and cysteine 24–cysteine 56.

Its subcellular location is the secreted. In terms of biological role, serine protease inhibitor which exhibits anti-trypsin activity. In the pancreas, protects against trypsin-catalyzed premature activation of zymogens. Its function is as follows. In the male reproductive tract, binds to sperm heads where it modulates sperm capacitance by inhibiting calcium uptake and nitrogen oxide (NO) production. The sequence is that of Serine protease inhibitor Kazal-type 1 (SPINK1) from Equus caballus (Horse).